The chain runs to 127 residues: CST complex subunit TEN1 (127 aa).

It belongs to the TEN1 family. In terms of assembly, component of the CST complex, composed of CTC1, TEN1 and STN1. Interacts with STN1. No interaction with POT1A, but competes with it for STN1 binding. Ubiquitous. High expression in meristematic tissues and in vasculature.

It is found in the nucleus. Its subcellular location is the chromosome. The protein resides in the telomere. Its function is as follows. Required for the maintenance of meristems and stem cells through the reduction of DNA damage. Promotes telomere integrity by maintaining telomere length and proper architecture of the chromosome terminus. Negatively regulates telomerase repeat addition processivity. Hampers contacts between enzymatically active telomerase and CST complex. This Arabidopsis thaliana (Mouse-ear cress) protein is CST complex subunit TEN1.